Reading from the N-terminus, the 196-residue chain is Carnitine operon protein CaiE (196 aa).

Residues 173–196 (TQPLRQMEENRPRLQGTTDVTPKR) form a disordered region. Residues 187-196 (QGTTDVTPKR) show a composition bias toward polar residues.

This sequence belongs to the transferase hexapeptide repeat family.

It functions in the pathway amine and polyamine metabolism; carnitine metabolism. Functionally, overproduction of CaiE stimulates the activity of CaiB and CaiD. This is Carnitine operon protein CaiE from Escherichia coli O139:H28 (strain E24377A / ETEC).